The primary structure comprises 319 residues: 4-diphosphocytidyl-2-C-methyl-D-erythritol kinase (319 aa).

K21 is an active-site residue. 106–116 (PIGAGLAGGSS) is an ATP binding site. D148 is an active-site residue.

The protein belongs to the GHMP kinase family. IspE subfamily.

It catalyses the reaction 4-CDP-2-C-methyl-D-erythritol + ATP = 4-CDP-2-C-methyl-D-erythritol 2-phosphate + ADP + H(+). Its pathway is isoprenoid biosynthesis; isopentenyl diphosphate biosynthesis via DXP pathway; isopentenyl diphosphate from 1-deoxy-D-xylulose 5-phosphate: step 3/6. In terms of biological role, catalyzes the phosphorylation of the position 2 hydroxy group of 4-diphosphocytidyl-2C-methyl-D-erythritol. The protein is 4-diphosphocytidyl-2-C-methyl-D-erythritol kinase of Prochlorococcus marinus (strain MIT 9313).